A 1353-amino-acid polypeptide reads, in one-letter code: Xanthine dehydrogenase (1353 aa).

The 2Fe-2S ferredoxin-type domain maps to 17–104 (STLIFFVNGK…GSAVTTVEGI (88 aa)). 8 residues coordinate [2Fe-2S] cluster: cysteine 56, cysteine 61, cysteine 64, cysteine 86, cysteine 126, cysteine 129, cysteine 161, and cysteine 163. The FAD-binding PCMH-type domain occupies 245–434 (YKGERATWYR…VGLYFPKTLE (190 aa)). FAD contacts are provided by residues 273-280 (LVVGNTEI), phenylalanine 353, 363-367 (SLGGN), aspartate 376, leucine 424, and lysine 442. 2 residues coordinate Mo-molybdopterin: glutamine 790 and phenylalanine 821. Substrate contacts are provided by glutamate 825 and arginine 903. Arginine 935 is a binding site for Mo-molybdopterin. Position 937 (phenylalanine 937) interacts with substrate. Alanine 1102 is a binding site for Mo-molybdopterin. Catalysis depends on glutamate 1285, which acts as the Proton acceptor.

It belongs to the xanthine dehydrogenase family. In terms of assembly, homodimer. Requires FAD as cofactor. Mo-molybdopterin serves as cofactor. The cofactor is [2Fe-2S] cluster.

The protein localises to the peroxisome. It catalyses the reaction xanthine + NAD(+) + H2O = urate + NADH + H(+). It carries out the reaction hypoxanthine + NAD(+) + H2O = xanthine + NADH + H(+). Functionally, key enzyme in purine degradation. Catalyzes the oxidation of hypoxanthine to xanthine. Catalyzes the oxidation of xanthine to uric acid. This chain is Xanthine dehydrogenase (XDH), found in Calliphora vicina (Blue blowfly).